The following is a 303-amino-acid chain: Recombination-associated protein RdgC (303 aa).

The protein belongs to the RdgC family.

It is found in the cytoplasm. The protein localises to the nucleoid. In terms of biological role, may be involved in recombination. The sequence is that of Recombination-associated protein RdgC from Yersinia pseudotuberculosis serotype O:1b (strain IP 31758).